A 618-amino-acid polypeptide reads, in one-letter code: Glutathione-regulated potassium-efflux system protein (618 aa).

A run of 12 helical transmembrane segments spans residues 6 to 26 (NPEL…VPLF), 32 to 52 (GSVL…FGIV), 55 to 75 (PTAV…IIGL), 94 to 114 (LLQV…LLGL), 118 to 138 (VSFI…MQSL), 152 to 172 (VIST…SVAF), 186 to 206 (WVSI…GKWL), 227 to 247 (ALLV…SMAM), 274 to 294 (GLLL…HLVF), 298 to 318 (ILLL…VYII), 336 to 356 (MAHG…AEVI), and 362 to 382 (ATFT…AQIA). The RCK N-terminal domain occupies 409 to 525 (EDNVLVIGFG…LIKQDVDFIV (117 aa)).

The protein belongs to the monovalent cation:proton antiporter 2 (CPA2) transporter (TC 2.A.37) family.

It is found in the cell inner membrane. Its function is as follows. Transport system that facilitate potassium-efflux, possibly by potassium-proton antiport. This chain is Glutathione-regulated potassium-efflux system protein (kefBC), found in Haemophilus influenzae (strain ATCC 51907 / DSM 11121 / KW20 / Rd).